Here is an 815-residue protein sequence, read N- to C-terminus: Minichromosome loss protein 1 (815 aa).

WD repeat units lie at residues 11–50 (AHTD…EPDS), 53–90 (NHQD…EHTL), 93–132 (RTTL…QIFS), 135–174 (PAKA…LIKF), and 228–267 (ENHS…VVVE). The disordered stretch occupies residues 306–362 (LKEENDPTKPLTSSKSKNRTSKELDDLFGSDDEQSQNVNDLDGNSANEENEFINHDG). Residues 340–352 (SQNVNDLDGNSAN) are compositionally biased toward polar residues. One copy of the WD 6 repeat lies at 517–553 (ENESPVTISLSSSVVLVCTSAGYVRVFSRQGFPISIH).

In terms of assembly, interacts with pof3 and pol1.

The protein resides in the nucleus. It is found in the chromosome. Functionally, has a role in regulating DNA replication complexes. Acts as a regulator of post DNA replication initiation. Associates with chromatin during G1 and S phases of mitosis. Required for the transcriptional repression of the outer repeats of the centromeric region. Acts as a polymerase alpha replication accessory factor and is important for S-phase DNA damage survival. Plays a role in lagging-strand synthesis and Ozaki fragment processing, in addition to DNA repair. The sequence is that of Minichromosome loss protein 1 (mcl1) from Schizosaccharomyces pombe (strain 972 / ATCC 24843) (Fission yeast).